The following is a 473-amino-acid chain: Glutamate--tRNA ligase (473 aa).

The 'HIGH' region signature appears at 11–21 (PSPTGFLHIGG). The 'KMSKS' region motif lies at 240 to 244 (KLSKR). Lysine 243 contacts ATP.

This sequence belongs to the class-I aminoacyl-tRNA synthetase family. Glutamate--tRNA ligase type 1 subfamily. As to quaternary structure, monomer.

It localises to the cytoplasm. The catalysed reaction is tRNA(Glu) + L-glutamate + ATP = L-glutamyl-tRNA(Glu) + AMP + diphosphate. Its function is as follows. Catalyzes the attachment of glutamate to tRNA(Glu) in a two-step reaction: glutamate is first activated by ATP to form Glu-AMP and then transferred to the acceptor end of tRNA(Glu). This is Glutamate--tRNA ligase from Afipia carboxidovorans (strain ATCC 49405 / DSM 1227 / KCTC 32145 / OM5) (Oligotropha carboxidovorans).